A 207-amino-acid polypeptide reads, in one-letter code: Histidine biosynthesis bifunctional protein HisIE (207 aa).

The interval 1–117 (MQNFKELNEK…KISKNADFVF (117 aa)) is phosphoribosyl-AMP cyclohydrolase. A phosphoribosyl-ATP pyrophosphohydrolase region spans residues 118 to 207 (LARLEKLINA…ISKLKERHKA (90 aa)).

This sequence in the N-terminal section; belongs to the PRA-CH family. The protein in the C-terminal section; belongs to the PRA-PH family.

The protein resides in the cytoplasm. The enzyme catalyses 1-(5-phospho-beta-D-ribosyl)-ATP + H2O = 1-(5-phospho-beta-D-ribosyl)-5'-AMP + diphosphate + H(+). It carries out the reaction 1-(5-phospho-beta-D-ribosyl)-5'-AMP + H2O = 1-(5-phospho-beta-D-ribosyl)-5-[(5-phospho-beta-D-ribosylamino)methylideneamino]imidazole-4-carboxamide. It participates in amino-acid biosynthesis; L-histidine biosynthesis; L-histidine from 5-phospho-alpha-D-ribose 1-diphosphate: step 2/9. The protein operates within amino-acid biosynthesis; L-histidine biosynthesis; L-histidine from 5-phospho-alpha-D-ribose 1-diphosphate: step 3/9. This Campylobacter jejuni subsp. jejuni serotype O:2 (strain ATCC 700819 / NCTC 11168) protein is Histidine biosynthesis bifunctional protein HisIE (hisI).